The sequence spans 102 residues: MAAPRQIAFYGKGGTGKPKRKPEPVTASKEDRCLGSPSKNKAHFHSRMNVMARMRGGHGFRVPSAASRKAMKHKWKGQPLPKKALILLEGTKMGTGQPPVAS.

A disordered region spans residues 1–41 (MAAPRQIAFYGKGGTGKPKRKPEPVTASKEDRCLGSPSKNK).

This sequence to the N-terminal of nitrogenase iron protein (NifH). Has lost the ATP-binding site.

In terms of biological role, this protein is either not expressed, expressed at low levels or rapidly degraded. This is an uncharacterized protein from Rhizobium meliloti (Ensifer meliloti).